Reading from the N-terminus, the 558-residue chain is D-xylose-proton symporter-like 3, chloroplastic (558 aa).

Residues 1 to 31 (MAFAVSVQSHFAIRALKRDHFKNPSPRTFCS) constitute a chloroplast transit peptide. The next 12 helical transmembrane spans lie at 98-118 (VILPFIFPALGGLLFGYDIGA), 146-166 (LVVSGSLYGALLGSISVYGVA), 175-195 (LIIAAVLYLLGSLITGCAPDL), 197-217 (ILLVGRLLYGFGIGLAMHGAP), 238-258 (LFIVLGILLGFSVGSFQIDVV), 264-284 (MYGFGTPVALLMGLGMWSLPA), 359-379 (ALTIGGGLVLFQQITGQPSVL), 400-420 (VSVIIGVFKLLMTWVAVAKVD), 426-446 (PLLIGGVSGIALSLFLLSAYY), 449-469 (LGGFPLVAVGALLLYVGCYQI), 491-511 (GISLAVLTNFGSNAIVTFAFS), and 522-542 (LFLLFGGIALVSLLFVILVVP).

Belongs to the major facilitator superfamily. Sugar transporter (TC 2.A.1.1) family.

The protein resides in the plastid. It is found in the chloroplast membrane. In Arabidopsis thaliana (Mouse-ear cress), this protein is D-xylose-proton symporter-like 3, chloroplastic.